The following is a 270-amino-acid chain: Putative pyruvate, phosphate dikinase regulatory protein (270 aa).

Residue 148-155 (GISRTSKT) participates in ADP binding.

It belongs to the pyruvate, phosphate/water dikinase regulatory protein family. PDRP subfamily.

It carries out the reaction N(tele)-phospho-L-histidyl/L-threonyl-[pyruvate, phosphate dikinase] + ADP = N(tele)-phospho-L-histidyl/O-phospho-L-threonyl-[pyruvate, phosphate dikinase] + AMP + H(+). The catalysed reaction is N(tele)-phospho-L-histidyl/O-phospho-L-threonyl-[pyruvate, phosphate dikinase] + phosphate + H(+) = N(tele)-phospho-L-histidyl/L-threonyl-[pyruvate, phosphate dikinase] + diphosphate. Its function is as follows. Bifunctional serine/threonine kinase and phosphorylase involved in the regulation of the pyruvate, phosphate dikinase (PPDK) by catalyzing its phosphorylation/dephosphorylation. The sequence is that of Putative pyruvate, phosphate dikinase regulatory protein from Bacillus cereus (strain AH187).